Here is a 267-residue protein sequence, read N- to C-terminus: Probable ribose-5-phosphate isomerase 1 (267 aa).

G2 carries the post-translational modification N-acetylglycine. At S92 the chain carries Phosphoserine.

The protein belongs to the ribose 5-phosphate isomerase family. Expressed in roots, cotyledons, leaves and flowers.

It localises to the cytoplasm. It carries out the reaction aldehydo-D-ribose 5-phosphate = D-ribulose 5-phosphate. It functions in the pathway carbohydrate degradation; pentose phosphate pathway; D-ribose 5-phosphate from D-ribulose 5-phosphate (non-oxidative stage): step 1/1. Its function is as follows. Catalyzes the reversible conversion of ribose-5-phosphate to ribulose 5-phosphate. The chain is Probable ribose-5-phosphate isomerase 1 (RPI1) from Arabidopsis thaliana (Mouse-ear cress).